The primary structure comprises 161 residues: MKRAADYIEMKSPAKPEYVGIIRLTLSGIASKMGYSYDDIEDLKIAVSEACTNAVQHAYKADNNTGEVSVRFGVFEDRLEIVVADQGDSFDIQDKQKELGPYSPEHTVDQLSEGGLGLYLMETLMDEVHVQIDSGVTVSMTKFLNRERVDDGTTVQNYETN.

It belongs to the anti-sigma-factor family.

It carries out the reaction L-seryl-[protein] + ATP = O-phospho-L-seryl-[protein] + ADP + H(+). The enzyme catalyses L-threonyl-[protein] + ATP = O-phospho-L-threonyl-[protein] + ADP + H(+). Negative regulator of sigma-B activity. Phosphorylates and inactivates its specific antagonist protein, RsbV. Upon phosphorylation of RsbV, RsbW is released and binds to sigma-B, thereby blocking its ability to form an RNA polymerase holoenzyme (E-sigma-B). The sequence is that of Serine-protein kinase RsbW from Bacillus licheniformis (strain ATCC 14580 / DSM 13 / JCM 2505 / CCUG 7422 / NBRC 12200 / NCIMB 9375 / NCTC 10341 / NRRL NRS-1264 / Gibson 46).